A 113-amino-acid chain; its full sequence is DNA-directed RNA polymerase subunit Rpo4 (113 aa).

This sequence belongs to the eukaryotic RPB4 RNA polymerase subunit family. Part of the 13-subunit RNA polymerase complex. Forms a stalk with Rpo7 that extends from the main structure.

It is found in the cytoplasm. The enzyme catalyses RNA(n) + a ribonucleoside 5'-triphosphate = RNA(n+1) + diphosphate. Its function is as follows. DNA-dependent RNA polymerase (RNAP) catalyzes the transcription of DNA into RNA using the four ribonucleoside triphosphates as substrates. This subunit is less well bound than the others. The protein is DNA-directed RNA polymerase subunit Rpo4 of Saccharolobus solfataricus (strain ATCC 35092 / DSM 1617 / JCM 11322 / P2) (Sulfolobus solfataricus).